A 496-amino-acid polypeptide reads, in one-letter code: Glycerol kinase (496 aa).

Residue threonine 12 participates in ADP binding. ATP-binding residues include threonine 12, threonine 13, and serine 14. Threonine 12 lines the sn-glycerol 3-phosphate pocket. Residue arginine 16 participates in ADP binding. Sn-glycerol 3-phosphate is bound by residues arginine 82, glutamate 83, and tyrosine 134. Arginine 82, glutamate 83, and tyrosine 134 together coordinate glycerol. Histidine 230 is subject to Phosphohistidine; by HPr. A sn-glycerol 3-phosphate-binding site is contributed by aspartate 244. 2 residues coordinate glycerol: aspartate 244 and glutamine 245. 2 residues coordinate ADP: threonine 266 and glycine 309. Threonine 266, glycine 309, glutamine 313, and glycine 410 together coordinate ATP. Glycine 410 and asparagine 414 together coordinate ADP.

The protein belongs to the FGGY kinase family. Homotetramer and homodimer (in equilibrium). Post-translationally, the phosphoenolpyruvate-dependent sugar phosphotransferase system (PTS), including enzyme I, and histidine-containing protein (HPr) are required for the phosphorylation, which leads to the activation of the enzyme.

The catalysed reaction is glycerol + ATP = sn-glycerol 3-phosphate + ADP + H(+). It participates in polyol metabolism; glycerol degradation via glycerol kinase pathway; sn-glycerol 3-phosphate from glycerol: step 1/1. Activated by phosphorylation and inhibited by fructose 1,6-bisphosphate (FBP). Key enzyme in the regulation of glycerol uptake and metabolism. Catalyzes the phosphorylation of glycerol to yield sn-glycerol 3-phosphate. The polypeptide is Glycerol kinase (Bacillus velezensis (strain DSM 23117 / BGSC 10A6 / LMG 26770 / FZB42) (Bacillus amyloliquefaciens subsp. plantarum)).